Here is a 286-residue protein sequence, read N- to C-terminus: Putative quercetin 2,3-dioxygenase PA2418 (286 aa).

A divalent metal cation is bound by residues His-61, His-63, His-105, and Glu-107.

The protein belongs to the pirin family. A divalent metal cation serves as cofactor.

The catalysed reaction is quercetin + O2 = 2-(3,4-dihydroxybenzoyloxy)-4,6-dihydroxybenzoate + CO. It functions in the pathway flavonoid metabolism; quercetin degradation. Its function is as follows. Putative quercetin 2,3-dioxygenase. In Pseudomonas aeruginosa (strain ATCC 15692 / DSM 22644 / CIP 104116 / JCM 14847 / LMG 12228 / 1C / PRS 101 / PAO1), this protein is Putative quercetin 2,3-dioxygenase PA2418.